We begin with the raw amino-acid sequence, 252 residues long: NAD-dependent protein deacetylase (252 aa).

In terms of domain architecture, Deacetylase sirtuin-type spans aspartate 2–isoleucine 243. The NAD(+) site is built by alanine 28, threonine 32, phenylalanine 39, arginine 40, glutamine 109, isoleucine 111, aspartate 112, and histidine 127. Phenylalanine 39 serves as a coordination point for nicotinamide. Nicotinamide-binding residues include isoleucine 111 and aspartate 112. Histidine 127 serves as the catalytic Proton acceptor. Residues cysteine 135, cysteine 138, cysteine 148, and cysteine 150 each coordinate Zn(2+). NAD(+)-binding residues include threonine 188, serine 189, and asparagine 211.

The protein belongs to the sirtuin family. Class U subfamily. Requires Zn(2+) as cofactor.

It localises to the cytoplasm. It catalyses the reaction N(6)-acetyl-L-lysyl-[protein] + NAD(+) + H2O = 2''-O-acetyl-ADP-D-ribose + nicotinamide + L-lysyl-[protein]. Functionally, NAD-dependent protein deacetylase which modulates the activities of several enzymes which are inactive in their acetylated form. In Fusobacterium nucleatum subsp. nucleatum (strain ATCC 25586 / DSM 15643 / BCRC 10681 / CIP 101130 / JCM 8532 / KCTC 2640 / LMG 13131 / VPI 4355), this protein is NAD-dependent protein deacetylase.